The following is a 334-amino-acid chain: N-acetyl-gamma-glutamyl-phosphate reductase (334 aa).

Residue cysteine 154 is part of the active site.

The protein belongs to the NAGSA dehydrogenase family. Type 1 subfamily.

The protein resides in the cytoplasm. It carries out the reaction N-acetyl-L-glutamate 5-semialdehyde + phosphate + NADP(+) = N-acetyl-L-glutamyl 5-phosphate + NADPH + H(+). It participates in amino-acid biosynthesis; L-arginine biosynthesis; N(2)-acetyl-L-ornithine from L-glutamate: step 3/4. In terms of biological role, catalyzes the NADPH-dependent reduction of N-acetyl-5-glutamyl phosphate to yield N-acetyl-L-glutamate 5-semialdehyde. This Salmonella typhi protein is N-acetyl-gamma-glutamyl-phosphate reductase.